We begin with the raw amino-acid sequence, 67 residues long: Systemic RNA interference defective protein 5 (67 aa).

Topologically, residues 1–18 are extracellular; the sequence is MPSKNCAKNLHACQWERD. A helical membrane pass occupies residues 19 to 39; the sequence is IALVFLGLMVLFNIGQVVYMN. The Cytoplasmic segment spans residues 40-67; the sequence is RARLYRLIRRGAEQIPADDEEPIIGIRD.

Ubiquitously present in most tissues tested. Expressed in the somatic cells of intestine, muscle, neurons, somatic gonad and embryos but not in the germline (at protein level).

The protein resides in the late endosome membrane. In terms of biological role, plays a role in RNA-mediated gene silencing by mediating transport of both ingested and endogenous dsRNA between cells. Not required for the uptake of dsRNA from the intestinal lumen. The polypeptide is Systemic RNA interference defective protein 5 (Caenorhabditis elegans).